A 200-amino-acid chain; its full sequence is 3-isopropylmalate dehydratase small subunit (200 aa).

This sequence belongs to the LeuD family. LeuD type 1 subfamily. Heterodimer of LeuC and LeuD.

The enzyme catalyses (2R,3S)-3-isopropylmalate = (2S)-2-isopropylmalate. It participates in amino-acid biosynthesis; L-leucine biosynthesis; L-leucine from 3-methyl-2-oxobutanoate: step 2/4. Its function is as follows. Catalyzes the isomerization between 2-isopropylmalate and 3-isopropylmalate, via the formation of 2-isopropylmaleate. This is 3-isopropylmalate dehydratase small subunit from Aliivibrio fischeri (strain ATCC 700601 / ES114) (Vibrio fischeri).